We begin with the raw amino-acid sequence, 128 residues long: Fluoride-specific ion channel FluC (128 aa).

4 helical membrane passes run 5–25 (IVAI…LSLA), 35–55 (LGTL…AVVF), 67–87 (LFVI…SVEV), and 96–116 (FGWA…LTAL). Na(+) contacts are provided by Gly75 and Thr78.

It belongs to the fluoride channel Fluc/FEX (TC 1.A.43) family.

It is found in the cell inner membrane. It catalyses the reaction fluoride(in) = fluoride(out). With respect to regulation, na(+) is not transported, but it plays an essential structural role and its presence is essential for fluoride channel function. Functionally, fluoride-specific ion channel. Important for reducing fluoride concentration in the cell, thus reducing its toxicity. In Burkholderia lata (strain ATCC 17760 / DSM 23089 / LMG 22485 / NCIMB 9086 / R18194 / 383), this protein is Fluoride-specific ion channel FluC.